The following is a 325-amino-acid chain: DNA-directed RNA polymerase subunit alpha (325 aa).

The interval 1 to 231 (MQTSLLKPKI…DQLSVFAALE (231 aa)) is alpha N-terminal domain (alpha-NTD). Residues 246-325 (IDPILLRPVD…ENWPPAGLDK (80 aa)) form an alpha C-terminal domain (alpha-CTD) region.

Belongs to the RNA polymerase alpha chain family. As to quaternary structure, homodimer. The RNAP catalytic core consists of 2 alpha, 1 beta, 1 beta' and 1 omega subunit. When a sigma factor is associated with the core the holoenzyme is formed, which can initiate transcription.

It carries out the reaction RNA(n) + a ribonucleoside 5'-triphosphate = RNA(n+1) + diphosphate. Functionally, DNA-dependent RNA polymerase catalyzes the transcription of DNA into RNA using the four ribonucleoside triphosphates as substrates. This Burkholderia orbicola (strain MC0-3) protein is DNA-directed RNA polymerase subunit alpha.